The chain runs to 363 residues: GDSL esterase/lipase At2g24560 (363 aa).

An N-terminal signal peptide occupies residues 1-22; it reads MSTSKTITFTLFIAALLSSCDA. N25 is a glycosylation site (N-linked (GlcNAc...) asparagine). The active-site Nucleophile is the S41. N-linked (GlcNAc...) asparagine glycans are attached at residues N103 and N325. Active-site residues include D333 and H336.

It belongs to the 'GDSL' lipolytic enzyme family.

The protein resides in the secreted. This chain is GDSL esterase/lipase At2g24560, found in Arabidopsis thaliana (Mouse-ear cress).